The chain runs to 510 residues: L-2,4-diaminobutyrate decarboxylase (510 aa).

N6-(pyridoxal phosphate)lysine is present on Lys319.

Belongs to the group II decarboxylase family. Requires pyridoxal 5'-phosphate as cofactor.

It catalyses the reaction L-2,4-diaminobutanoate + H(+) = propane-1,3-diamine + CO2. It participates in amine and polyamine biosynthesis; 1,3-diaminopropane biosynthesis; 1,3-diaminopropane from L-aspartate 4-semialdehyde: step 2/2. The sequence is that of L-2,4-diaminobutyrate decarboxylase (ddc) from Acinetobacter baumannii.